A 358-amino-acid polypeptide reads, in one-letter code: Peptide chain release factor 1 (358 aa).

Glutamine 233 bears the N5-methylglutamine mark.

This sequence belongs to the prokaryotic/mitochondrial release factor family. Post-translationally, methylated by PrmC. Methylation increases the termination efficiency of RF1.

The protein localises to the cytoplasm. Peptide chain release factor 1 directs the termination of translation in response to the peptide chain termination codons UAG and UAA. The chain is Peptide chain release factor 1 from Staphylococcus saprophyticus subsp. saprophyticus (strain ATCC 15305 / DSM 20229 / NCIMB 8711 / NCTC 7292 / S-41).